We begin with the raw amino-acid sequence, 176 residues long: Probable DNA-directed RNA polymerase subunit delta (176 aa).

One can recognise an HTH HARE-type domain in the interval 14-81; the sequence is CSMIEVVHSV…GENRWGLRSW (68 aa). The segment at 90–176 is disordered; it reads EILPQPKPKK…ETEEEEEEEL (87 aa). Acidic residues predominate over residues 106 to 176; that stretch reads DGFDDYIEED…ETEEEEEEEL (71 aa).

Belongs to the RpoE family. As to quaternary structure, RNAP is composed of a core of 2 alpha, a beta and a beta' subunits. The core is associated with a delta subunit and one of several sigma factors.

Its function is as follows. Participates in both the initiation and recycling phases of transcription. In the presence of the delta subunit, RNAP displays an increased specificity of transcription, a decreased affinity for nucleic acids, and an increased efficiency of RNA synthesis because of enhanced recycling. The protein is Probable DNA-directed RNA polymerase subunit delta of Bacillus thuringiensis subsp. konkukian (strain 97-27).